The sequence spans 256 residues: Endonuclease NucS (256 aa).

The tract at residues 62-97 (AAKSAQHSRESVAGGAVDGDSATHSPESVAAGEPEK) is disordered.

The protein belongs to the NucS endonuclease family.

Its subcellular location is the cytoplasm. Functionally, cleaves both 3' and 5' ssDNA extremities of branched DNA structures. The chain is Endonuclease NucS from Bifidobacterium longum (strain NCC 2705).